A 250-amino-acid chain; its full sequence is Acetylglutamate kinase (250 aa).

Residues 41–42 (GG), R63, and N156 contribute to the substrate site.

It belongs to the acetylglutamate kinase family. ArgB subfamily.

It is found in the cytoplasm. It catalyses the reaction N-acetyl-L-glutamate + ATP = N-acetyl-L-glutamyl 5-phosphate + ADP. It functions in the pathway amino-acid biosynthesis; L-arginine biosynthesis; N(2)-acetyl-L-ornithine from L-glutamate: step 2/4. Catalyzes the ATP-dependent phosphorylation of N-acetyl-L-glutamate. The protein is Acetylglutamate kinase of Listeria monocytogenes serovar 1/2a (strain ATCC BAA-679 / EGD-e).